We begin with the raw amino-acid sequence, 277 residues long: Probable cyclic nucleotide phosphodiesterase MCR_0369 (277 aa).

Asp-17, His-19, Asp-53, Asn-83, His-165, His-204, and His-206 together coordinate Fe cation. Residues His-19, Asp-53, and 83–84 (NH) each bind AMP. His-206 is a binding site for AMP.

The protein belongs to the cyclic nucleotide phosphodiesterase class-III family. Fe(2+) serves as cofactor.

The protein is Probable cyclic nucleotide phosphodiesterase MCR_0369 of Moraxella catarrhalis (strain BBH18).